The chain runs to 393 residues: 1-deoxy-D-xylulose 5-phosphate reductoisomerase (393 aa).

Threonine 10, glycine 11, serine 12, isoleucine 13, arginine 37, glutamine 38, and asparagine 124 together coordinate NADPH. Residue lysine 125 participates in 1-deoxy-D-xylulose 5-phosphate binding. Residue glutamate 126 participates in NADPH binding. Aspartate 150 lines the Mn(2+) pocket. Positions 151, 152, 179, and 202 each coordinate 1-deoxy-D-xylulose 5-phosphate. Residue glutamate 152 coordinates Mn(2+). NADPH is bound at residue glycine 208. 1-deoxy-D-xylulose 5-phosphate-binding residues include serine 215, asparagine 220, lysine 221, and glutamate 224. Residue glutamate 224 participates in Mn(2+) binding.

It belongs to the DXR family. The cofactor is Mg(2+). It depends on Mn(2+) as a cofactor.

It carries out the reaction 2-C-methyl-D-erythritol 4-phosphate + NADP(+) = 1-deoxy-D-xylulose 5-phosphate + NADPH + H(+). It participates in isoprenoid biosynthesis; isopentenyl diphosphate biosynthesis via DXP pathway; isopentenyl diphosphate from 1-deoxy-D-xylulose 5-phosphate: step 1/6. Functionally, catalyzes the NADPH-dependent rearrangement and reduction of 1-deoxy-D-xylulose-5-phosphate (DXP) to 2-C-methyl-D-erythritol 4-phosphate (MEP). The chain is 1-deoxy-D-xylulose 5-phosphate reductoisomerase from Cupriavidus necator (strain ATCC 17699 / DSM 428 / KCTC 22496 / NCIMB 10442 / H16 / Stanier 337) (Ralstonia eutropha).